The sequence spans 299 residues: Transcription elongation factor A protein 2 (299 aa).

The TFIIS N-terminal domain occupies 6–83 (EEIARIARRL…KSWKKLLDAS (78 aa)). Lysine 58 participates in a covalent cross-link: Glycyl lysine isopeptide (Lys-Gly) (interchain with G-Cter in ubiquitin). A phosphoserine mark is found at serine 60 and serine 100. The disordered stretch occupies residues 86 to 128 (KARERGRGMPLPTSSRDASEAPDPSRKRPELPRAPSTPRITTF). Basic and acidic residues predominate over residues 102–116 (DASEAPDPSRKRPEL). The region spanning 138-254 (VRNKCREMLT…EHQMARTGGT (117 aa)) is the TFIIS central domain. A TFIIS-type zinc finger spans residues 257–297 (DLFTCGKCRKKNCTYTQVQTRSSDEPMTTFVVCNECGNRWK). Positions 261, 264, 289, and 292 each coordinate Zn(2+).

The protein belongs to the TFS-II family. Interacts with the basal transcription factor GTF2B. Interacts with REXO1. As to expression, testis and ovary specific.

It localises to the nucleus. Necessary for efficient RNA polymerase II transcription elongation past template-encoded arresting sites. The arresting sites in DNA have the property of trapping a certain fraction of elongating RNA polymerases that pass through, resulting in locked ternary complexes. Cleavage of the nascent transcript by S-II allows the resumption of elongation from the new 3'-terminus. In Homo sapiens (Human), this protein is Transcription elongation factor A protein 2 (TCEA2).